The sequence spans 116 residues: Cystatin (116 aa).

Positions glutamine 53–glycine 57 match the Secondary area of contact motif. Cystine bridges form between cysteine 71/cysteine 81 and cysteine 95/cysteine 115. Serine 80 carries the post-translational modification Phosphoserine.

This sequence belongs to the cystatin family.

It localises to the secreted. This protein binds tightly to and inhibits papain and cathepsin B. In Coturnix japonica (Japanese quail), this protein is Cystatin.